The following is a 316-amino-acid chain: Galectin-8 (316 aa).

Galectin domains follow at residues 18-151 (YVST…IGFR) and 186-316 (FEAR…VRSW). A carbohydrate-binding residues include arginine 68, asparagine 78, and glutamate 88. Position 248–254 (248–254 (WGEEERN)) interacts with a beta-D-galactoside.

Homodimer. Interacts with CALCOCO2/NDP52. Interacts with PDPN; the interaction is glycosylation-dependent; may participate in connection of the lymphatic endothelium to the surrounding extracellular matrix. As to expression, expressed in liver, kidney, cardiac muscle, lung, and brain.

It localises to the cytoplasmic vesicle. The protein localises to the cytoplasm. The protein resides in the cytosol. In terms of biological role, beta-galactoside-binding lectin that acts as a sensor of membrane damage caused by infection and restricts the proliferation of infecting pathogens by targeting them for autophagy. Detects membrane rupture by binding beta-galactoside ligands located on the lumenal side of the endosome membrane; these ligands becoming exposed to the cytoplasm following rupture. Restricts infection by initiating autophagy via interaction with CALCOCO2/NDP52. Required to restrict infection of bacterial invasion such as S.typhimurium. Also required to restrict infection of Picornaviridae viruses. Has a marked preference for 3'-O-sialylated and 3'-O-sulfated glycans. The protein is Galectin-8 (Lgals8) of Rattus norvegicus (Rat).